The sequence spans 111 residues: MRFSLALLALPALAAAAPVPGGGKGAGQACNSGPVQCCNETTTVANAQKQGLLGGLLGVVVGPITGLVGLNCSPISVVGVLTGNSCTAQTVCCDHVTQNGLVNVGCTPISL.

The N-terminal stretch at 1–25 (MRFSLALLALPALAAAAPVPGGGKG) is a signal peptide. 4 disulfides stabilise this stretch: C30-C37, C38-C72, C86-C92, and C93-C106. N39 carries an N-linked (GlcNAc...) asparagine glycan.

It belongs to the fungal hydrophobin family. As to quaternary structure, self-assembles to form functional amyloid fibrils called rodlets. Self-assembly into fibrillar rodlets occurs spontaneously at hydrophobic:hydrophilic interfaces and the rodlets further associate laterally to form amphipathic monolayers.

Its subcellular location is the secreted. It is found in the cell wall. Aerial growth, conidiation, and dispersal of filamentous fungi in the environment rely upon a capability of their secreting small amphipathic proteins called hydrophobins (HPBs) with low sequence identity. Class I can self-assemble into an outermost layer of rodlet bundles on aerial cell surfaces, conferring cellular hydrophobicity that supports fungal growth, development and dispersal; whereas Class II form highly ordered films at water-air interfaces through intermolecular interactions but contribute nothing to the rodlet structure. SC4 is a dikaryon-specific class I hydrophobin that contributes to the formation of aerial hyphae and fruiting bodies. Plays a role within fruiting bodies by preventing gas channels filling with water under wet conditions, probably serving uninterrupted gas exchange. SC4 cannot fully substitute for SC3. Involved in the unusual characteristic of mounds to adhere to and completely envelop adjacent fruiting bodies on mosaic colonies. In Schizophyllum commune (Split gill fungus), this protein is Class I hydrophobin SC4.